The chain runs to 185 residues: MNWRSEHIWVELLKGSRKRGNFFWACILFLGSLGFLSVGISSYLGKNIISILPSQEILFFPQGVVMSFYGIAGLFISSYLWCTILWNVGSGYDRFDRKEGIVCIFRWGFPGIKRRVFLRFLMRDIQSIRIQVKEGLYPRRILYMEIRGQGIIPLTRTDDKFFTPREIEQKAAELAYFLRVPIEVF.

2 consecutive transmembrane segments (helical) span residues 21–43 (NFFW…ISSY) and 63–85 (GVVM…CTIL).

This sequence belongs to the Ycf4 family.

It localises to the plastid. The protein resides in the chloroplast thylakoid membrane. Seems to be required for the assembly of the photosystem I complex. The polypeptide is Photosystem I assembly protein Ycf4 (Aegilops crassa (Persian goatgrass)).